A 150-amino-acid chain; its full sequence is Putative ribosome maturation factor RimP (150 aa).

It belongs to the RimP family.

Its subcellular location is the cytoplasm. Its function is as follows. Required for maturation of 30S ribosomal subunits. The sequence is that of Putative ribosome maturation factor RimP from Mycobacterium leprae (strain TN).